The primary structure comprises 264 residues: Zinc transporter ZupT (264 aa).

5 helical membrane-spanning segments follow: residues 8–28, 36–56, 75–95, 121–141, and 148–168; these read AFIL…IAFV, FLSV…MIEI, WLTV…DKLI, GLMT…ATFI, and SIAI…GIAV. N132 and E135 together coordinate Fe(2+). Positions 135 and 160 each coordinate Zn(2+). Residues N161, E164, and E193 each contribute to the Fe(2+) site. E164 lines the Zn(2+) pocket. The next 3 helical transmembrane spans lie at 197-217, 219-239, and 244-264; these read AIIG…GAIF, AVAG…AEEY, and LAIY…LLFI.

It belongs to the ZIP transporter (TC 2.A.5) family. ZupT subfamily.

It localises to the cell membrane. It catalyses the reaction Zn(2+)(in) = Zn(2+)(out). Mediates zinc uptake. May also transport other divalent cations. The protein is Zinc transporter ZupT of Streptococcus mutans serotype c (strain ATCC 700610 / UA159).